We begin with the raw amino-acid sequence, 330 residues long: D-lactate dehydrogenase (330 aa).

Residues 156–157, Asp-176, 206–207, 233–235, and Asp-259 each bind NAD(+); these read RI, VP, and AAR. Arg-235 is a catalytic residue. The active site involves Glu-264. Catalysis depends on His-296, which acts as the Proton donor.

This sequence belongs to the D-isomer specific 2-hydroxyacid dehydrogenase family.

The enzyme catalyses (R)-lactate + NAD(+) = pyruvate + NADH + H(+). This is D-lactate dehydrogenase (ldhD) from Staphylococcus aureus (strain MRSA252).